The following is a 196-amino-acid chain: MKLNNFIDFSSILELNYNDFLPLDDNHKSYTYEDNIQLQDDSEARFLIQRAKDSLLSHTKIKDKYIRPKCEWDECEYSCKFYLSTDRKFYCVYFSYDLDFTILYFYGIIEKKTGKHLVVSHEETSDNVYPMMNHHMFNYEWDNYEHEDLRYPPYKYEDDPLELICCLEDQFNVFYEEMCKKNYNDNGSDDSNDDND.

It belongs to the mimivirus R24/R907 family.

This is an uncharacterized protein from Acanthamoeba polyphaga (Amoeba).